A 37-amino-acid chain; its full sequence is Large ribosomal subunit protein bL36c (37 aa).

In terms of assembly, component of the chloroplast large ribosomal subunit (LSU). Mature 70S chloroplast ribosomes of higher plants consist of a small (30S) and a large (50S) subunit. The 30S small subunit contains 1 molecule of ribosomal RNA (16S rRNA) and 24 different proteins. The 50S large subunit contains 3 rRNA molecules (23S, 5S and 4.5S rRNA) and 33 different proteins.

It localises to the plastid. The protein resides in the chloroplast. Functionally, component of the chloroplast ribosome (chloro-ribosome), a dedicated translation machinery responsible for the synthesis of chloroplast genome-encoded proteins, including proteins of the transcription and translation machinery and components of the photosynthetic apparatus. The polypeptide is Large ribosomal subunit protein bL36c (rpl36) (Spinacia oleracea (Spinach)).